The chain runs to 95 residues: Large ribosomal subunit protein bL27 (95 aa).

A propeptide spanning residues 1-6 (MILQLF) is cleaved from the precursor.

This sequence belongs to the bacterial ribosomal protein bL27 family. In terms of processing, the N-terminus is cleaved by ribosomal processing cysteine protease Prp.

This Caldanaerobacter subterraneus subsp. tengcongensis (strain DSM 15242 / JCM 11007 / NBRC 100824 / MB4) (Thermoanaerobacter tengcongensis) protein is Large ribosomal subunit protein bL27.